The sequence spans 413 residues: Serine hydroxymethyltransferase (413 aa).

(6S)-5,6,7,8-tetrahydrofolate-binding positions include L117 and 121–123; that span reads GHL. N6-(pyridoxal phosphate)lysine is present on K226. Residue 349–351 participates in (6S)-5,6,7,8-tetrahydrofolate binding; it reads SPF.

The protein belongs to the SHMT family. As to quaternary structure, homodimer. Requires pyridoxal 5'-phosphate as cofactor.

It localises to the cytoplasm. It carries out the reaction (6R)-5,10-methylene-5,6,7,8-tetrahydrofolate + glycine + H2O = (6S)-5,6,7,8-tetrahydrofolate + L-serine. Its pathway is one-carbon metabolism; tetrahydrofolate interconversion. It functions in the pathway amino-acid biosynthesis; glycine biosynthesis; glycine from L-serine: step 1/1. Functionally, catalyzes the reversible interconversion of serine and glycine with tetrahydrofolate (THF) serving as the one-carbon carrier. This reaction serves as the major source of one-carbon groups required for the biosynthesis of purines, thymidylate, methionine, and other important biomolecules. Also exhibits THF-independent aldolase activity toward beta-hydroxyamino acids, producing glycine and aldehydes, via a retro-aldol mechanism. The chain is Serine hydroxymethyltransferase from Pelobacter propionicus (strain DSM 2379 / NBRC 103807 / OttBd1).